A 547-amino-acid polypeptide reads, in one-letter code: Ribosome protection protein VmlR (547 aa).

Residues 5 to 200 form the ABC transporter 1 domain; sequence VTLTNVSYEV…FREKKRLTQQ (196 aa). Position 37 to 44 (37 to 44) interacts with ATP; sequence GKNGAGKS. The antibiotic resistance domain (ARD) stretch occupies residues 183–289; it reads GNYSGYMKFR…SIDTTHKTGK (107 aa). Coiled coils occupy residues 193-222 and 245-269; these read EKKR…GLAS and AKRT…AKAE. Residues 292–504 form the ABC transporter 2 domain; that stretch reads LEVQNVTKAF…REELRLKLET (213 aa). Position 324–331 (324–331) interacts with ATP; sequence GPNGSGKT. The tract at residues 483-547 is C-terminal extension (CTE); the sequence is KQLNDVPSER…KELDHQDKKD (65 aa). A coiled-coil region spans residues 488 to 543; the sequence is VPSERNEREELRLKLETERQEVLGKLSFMTPNDKGYKELDQAFNELTKRIKELDHQ.

This sequence belongs to the ABC transporter superfamily. ABCF family. ARE2 subfamily. As to quaternary structure, binds within the E-site of the 70S ribosome, where it contacts ribosomal proteins L1, L5, L33-1, S7, S11, the 16 and 23S rRNAs and the acceptor arm of the P-site tRNA.

It is found in the cytoplasm. Functionally, recognizes and binds in the vacant E-site of ribosomes stalled by some peptidyltransferase center (PTC)-targeting antibiotics. Makes contact with the PTC and both ribosomal subunits. Induces conformational changes in the P-site, which allows it to dislodge the antibiotic from its PTC binding site. Binds to ribosomes either directly following translation initation or subsequent to E tRNA release during elongation. Involved in resistance to a narrow spectrum of antibiotics (the streptogramin A antibiotic virginiamycin M, the lincosamide antibiotic lincomycin and the pleuromutilin antibiotic tiamulin). In Bacillus subtilis (strain 168), this protein is Ribosome protection protein VmlR.